We begin with the raw amino-acid sequence, 452 residues long: tRNA modification GTPase MnmE (452 aa).

Arg21, Glu78, and Lys118 together coordinate (6S)-5-formyl-5,6,7,8-tetrahydrofolate. The region spanning 214–375 is the TrmE-type G domain; that stretch reads GMKAVIAGRP…LREHLKTSMG (162 aa). Position 224 (Asn224) interacts with K(+). Residues 224–229, 243–249, and 268–271 each bind GTP; these read NAGKSS, TNIAGTT, and DTAG. A Mg(2+)-binding site is contributed by Ser228. Residues Thr243, Ile245, and Thr248 each contribute to the K(+) site. Thr249 is a binding site for Mg(2+). Lys452 is a binding site for (6S)-5-formyl-5,6,7,8-tetrahydrofolate.

Belongs to the TRAFAC class TrmE-Era-EngA-EngB-Septin-like GTPase superfamily. TrmE GTPase family. Homodimer. Heterotetramer of two MnmE and two MnmG subunits. Requires K(+) as cofactor.

It is found in the cytoplasm. Exhibits a very high intrinsic GTPase hydrolysis rate. Involved in the addition of a carboxymethylaminomethyl (cmnm) group at the wobble position (U34) of certain tRNAs, forming tRNA-cmnm(5)s(2)U34. In Haemophilus ducreyi (strain 35000HP / ATCC 700724), this protein is tRNA modification GTPase MnmE.